A 603-amino-acid chain; its full sequence is ATP-dependent zinc metalloprotease FtsH (603 aa).

Residues 1 to 2 are Stromal-facing; it reads MK. Residues 3 to 23 traverse the membrane as a helical segment; that stretch reads NLWIWSLPLIVLAFIGWQELA. The Lumenal portion of the chain corresponds to 24 to 101; that stretch reads NQMPVATSRM…DVDVHAVSNW (78 aa). The helical transmembrane segment at 102–122 threads the bilayer; sequence INVASNWIIPLIIIGVVIWLL. The Stromal portion of the chain corresponds to 123 to 603; the sequence is SRSASSNTTG…SQAARLTAVN (481 aa). 194–201 is an ATP binding site; the sequence is GPPGTGKT. Residue His-415 participates in Zn(2+) binding. Glu-416 is an active-site residue. Residues His-419 and Asp-493 each contribute to the Zn(2+) site.

It in the central section; belongs to the AAA ATPase family. The protein in the C-terminal section; belongs to the peptidase M41 family. In terms of assembly, homohexamer. Zn(2+) is required as a cofactor.

It is found in the plastid. Its subcellular location is the chloroplast thylakoid membrane. In terms of biological role, acts as a processive, ATP-dependent zinc metallopeptidase. This chain is ATP-dependent zinc metalloprotease FtsH, found in Cyanidioschyzon merolae (strain NIES-3377 / 10D) (Unicellular red alga).